The chain runs to 597 residues: Elongation factor 4 (597 aa).

The 183-residue stretch at 2-184 folds into the tr-type G domain; it reads KNIRNFSIIA…EVVNKIPPPK (183 aa). GTP is bound by residues 14 to 19 and 131 to 134; these read DHGKST and NKID.

It belongs to the TRAFAC class translation factor GTPase superfamily. Classic translation factor GTPase family. LepA subfamily.

The protein localises to the cell inner membrane. The catalysed reaction is GTP + H2O = GDP + phosphate + H(+). Required for accurate and efficient protein synthesis under certain stress conditions. May act as a fidelity factor of the translation reaction, by catalyzing a one-codon backward translocation of tRNAs on improperly translocated ribosomes. Back-translocation proceeds from a post-translocation (POST) complex to a pre-translocation (PRE) complex, thus giving elongation factor G a second chance to translocate the tRNAs correctly. Binds to ribosomes in a GTP-dependent manner. This chain is Elongation factor 4, found in Chromobacterium violaceum (strain ATCC 12472 / DSM 30191 / JCM 1249 / CCUG 213 / NBRC 12614 / NCIMB 9131 / NCTC 9757 / MK).